The sequence spans 229 residues: Uracil-DNA glycosylase (229 aa).

The active-site Proton acceptor is the D65.

The protein belongs to the uracil-DNA glycosylase (UDG) superfamily. UNG family.

The protein localises to the cytoplasm. It carries out the reaction Hydrolyzes single-stranded DNA or mismatched double-stranded DNA and polynucleotides, releasing free uracil.. Excises uracil residues from the DNA which can arise as a result of misincorporation of dUMP residues by DNA polymerase or due to deamination of cytosine. This is Uracil-DNA glycosylase from Limosilactobacillus fermentum (strain NBRC 3956 / LMG 18251) (Lactobacillus fermentum).